Consider the following 251-residue polypeptide: Large ribosomal subunit protein uL3 (251 aa).

Gln151 carries the post-translational modification N5-methylglutamine. Residues 219–251 are disordered; sequence PGAFRRNGEEAAAAPAAEAPAETPAEEAGQEGA. Positions 228-241 are enriched in low complexity; sequence EAAAAPAAEAPAET. The span at 242–251 shows a compositional bias: acidic residues; that stretch reads PAEEAGQEGA.

Belongs to the universal ribosomal protein uL3 family. In terms of assembly, part of the 50S ribosomal subunit. Forms a cluster with proteins L14 and L19. In terms of processing, methylated by PrmB.

Its function is as follows. One of the primary rRNA binding proteins, it binds directly near the 3'-end of the 23S rRNA, where it nucleates assembly of the 50S subunit. This is Large ribosomal subunit protein uL3 from Parvibaculum lavamentivorans (strain DS-1 / DSM 13023 / NCIMB 13966).